Reading from the N-terminus, the 911-residue chain is Valine--tRNA ligase (911 aa).

Residues 57 to 67 carry the 'HIGH' region motif; that stretch reads PTVSGSLHVGH. A 'KMSKS' region motif is present at residues 599–603; the sequence is KMSKS. Lysine 602 provides a ligand contact to ATP. The tract at residues 882-911 is disordered; the sequence is EESAAEGTPETEVAVEASELGEPPAKKPKH.

It belongs to the class-I aminoacyl-tRNA synthetase family. ValS type 2 subfamily. Monomer.

It localises to the cytoplasm. It carries out the reaction tRNA(Val) + L-valine + ATP = L-valyl-tRNA(Val) + AMP + diphosphate. Catalyzes the attachment of valine to tRNA(Val). As ValRS can inadvertently accommodate and process structurally similar amino acids such as threonine, to avoid such errors, it has a 'posttransfer' editing activity that hydrolyzes mischarged Thr-tRNA(Val) in a tRNA-dependent manner. The sequence is that of Valine--tRNA ligase from Bifidobacterium longum (strain NCC 2705).